The following is a 383-amino-acid chain: Putative glutamate--cysteine ligase 2-2 (383 aa).

This sequence belongs to the glutamate--cysteine ligase type 2 family. YbdK subfamily.

The enzyme catalyses L-cysteine + L-glutamate + ATP = gamma-L-glutamyl-L-cysteine + ADP + phosphate + H(+). Functionally, ATP-dependent carboxylate-amine ligase which exhibits weak glutamate--cysteine ligase activity. The protein is Putative glutamate--cysteine ligase 2-2 of Legionella pneumophila (strain Paris).